We begin with the raw amino-acid sequence, 1293 residues long: Cilia- and flagella-associated protein 57 A (1293 aa).

The WD 1 repeat unit spans residues 72–113 (PGTKGITCMTLSPSKRLLAWSEDCDSGIIVVFDLIKLDKLEK). The tract at residues 117–143 (QNYQEPSDKDKLDKQAEKDRRDRFEKE) is disordered. Positions 122–143 (PSDKDKLDKQAEKDRRDRFEKE) are enriched in basic and acidic residues. WD repeat units lie at residues 309–348 (PKNE…KNPY), 359–398 (DMKA…MQLN), 411–450 (FHSD…LENS), 535–574 (RGSG…PQKT), and 700–739 (SHFG…YQVK). 3 coiled-coil regions span residues 756 to 1016 (RDQY…REKT), 1045 to 1079 (IKEL…FKRT), and 1209 to 1285 (INHL…QIQN).

This sequence belongs to the CFAP57 family. Forms a heterodimer with CFAP57C. Associates with components of the nexin-dynein regulatory complex (N-DRC) and the CFAP184:CFAP263 complex.

Its subcellular location is the cell projection. It is found in the cilium. Its function is as follows. Associates with components of the nexin-dynein regulatory complex (N-DRC), a key regulator of ciliary/flagellar motility, and might act as an inner dynein arm (IDA) hub or linkage. The sequence is that of Cilia- and flagella-associated protein 57 A (CFAP57A) from Tetrahymena thermophila (strain SB210).